A 459-amino-acid polypeptide reads, in one-letter code: Argininosuccinate lyase (459 aa).

The protein belongs to the lyase 1 family. Argininosuccinate lyase subfamily.

Its subcellular location is the cytoplasm. It carries out the reaction 2-(N(omega)-L-arginino)succinate = fumarate + L-arginine. The protein operates within amino-acid biosynthesis; L-arginine biosynthesis; L-arginine from L-ornithine and carbamoyl phosphate: step 3/3. The sequence is that of Argininosuccinate lyase from Methylobacterium radiotolerans (strain ATCC 27329 / DSM 1819 / JCM 2831 / NBRC 15690 / NCIMB 10815 / 0-1).